The chain runs to 83 residues: STATDSSYYTNQQHPAGGGGGGASPYAHMGSYQYHASGLNNVSYSAKSSYDLGYTAAYTSYAPYGTSSSPVNNEPDKEDLEPE.

Residues 1–14 are compositionally biased toward polar residues; the sequence is STATDSSYYTNQQH. 2 disordered regions span residues 1–27 and 63–83; these read STAT…SPYA and PYGT…LEPE.

Belongs to the distal-less homeobox family. As to quaternary structure, interacts (via homeobox DNA-binding domain) with POU4F2; this interaction enhances retinal ganglion cell (RGC) differentiation.

It is found in the nucleus. Functionally, acts as a transcriptional activator. Activates transcription of CGA/alpha-GSU, via binding to the downstream activin regulatory element (DARE) in the gene promoter. Plays a role in terminal differentiation of interneurons, such as amacrine and bipolar cells in the developing retina. Likely to play a regulatory role in the development of the ventral forebrain. May play a role in craniofacial patterning and morphogenesis. In Rattus norvegicus (Rat), this protein is Homeobox protein DLX-2 (Dlx2).